The sequence spans 419 residues: MDKFRVQGPTTLQGEVTISGAKNAALPILFAALLAEEPVEIQNVPKLKDVDTSMKLLSQLGAKVERNGSVHIDASQVNVFCAPYDLVKTMRASIWALGPLVARFGQGQVSLPGGCTIGARPVDLHITGLEQLGATIKLEEGYVKASVEGRLKGAHIVMDKVSVGATVTIMCAATLAEGTTIIENAAREPEIVDTANFLVTLGAKIAGQGTDRITIEGVERLGGGVYRVLPDRIETGTFLVAAAISRGKILCRNAQPDTLDAVLAKLRDAGADIEVGEDWISLDMHGKRPKAVNVRTAPHPAFPTDMQAQFTLLNLVAEGTGFITETVFENRFMHVPELSRMGARAEIESNTVICHGVETLSGAQVMATDLRASASLVLAGCIAEGTTIVDRIYHIDRGYERIEDKLRALGANIERVKGE.

22 to 23 (KN) is a phosphoenolpyruvate binding site. UDP-N-acetyl-alpha-D-glucosamine is bound at residue Arg91. Residue Cys115 is the Proton donor of the active site. At Cys115 the chain carries 2-(S-cysteinyl)pyruvic acid O-phosphothioketal. UDP-N-acetyl-alpha-D-glucosamine is bound by residues 120 to 124 (RPVDL), 160 to 163 (KVSV), Asp305, and Val327.

Belongs to the EPSP synthase family. MurA subfamily.

It localises to the cytoplasm. It carries out the reaction phosphoenolpyruvate + UDP-N-acetyl-alpha-D-glucosamine = UDP-N-acetyl-3-O-(1-carboxyvinyl)-alpha-D-glucosamine + phosphate. Its pathway is cell wall biogenesis; peptidoglycan biosynthesis. In terms of biological role, cell wall formation. Adds enolpyruvyl to UDP-N-acetylglucosamine. The chain is UDP-N-acetylglucosamine 1-carboxyvinyltransferase from Salmonella agona (strain SL483).